The following is a 333-amino-acid chain: Flap endonuclease 1 (333 aa).

Positions Met-1–Arg-99 are N-domain. The Mg(2+) site is built by Asp-28, Asp-81, Glu-153, Glu-155, Asp-174, Asp-176, and Asp-235. Residues Glu-117 to Gly-255 are I-domain. An interaction with PCNA region spans residues Thr-325–Phe-333.

This sequence belongs to the XPG/RAD2 endonuclease family. FEN1 subfamily. In terms of assembly, interacts with PCNA. PCNA stimulates the nuclease activity without altering cleavage specificity. Mg(2+) serves as cofactor.

Structure-specific nuclease with 5'-flap endonuclease and 5'-3' exonuclease activities involved in DNA replication and repair. During DNA replication, cleaves the 5'-overhanging flap structure that is generated by displacement synthesis when DNA polymerase encounters the 5'-end of a downstream Okazaki fragment. Binds the unpaired 3'-DNA end and kinks the DNA to facilitate 5' cleavage specificity. Cleaves one nucleotide into the double-stranded DNA from the junction in flap DNA, leaving a nick for ligation. Also involved in the base excision repair (BER) pathway. Acts as a genome stabilization factor that prevents flaps from equilibrating into structures that lead to duplications and deletions. Also possesses 5'-3' exonuclease activity on nicked or gapped double-stranded DNA. The chain is Flap endonuclease 1 from Methanoculleus marisnigri (strain ATCC 35101 / DSM 1498 / JR1).